The chain runs to 495 residues: Keratin, type II cytoskeletal 74 (495 aa).

The segment at 1–105 (MASCHTAGHR…DPEIQKVRAQ (105 aa)) is head. The interval 106–141 (EREQIKALNDKFASFIDKVRFLEQQNQVLQTKWELL) is coil 1A. The region spanning 106–419 (EREQIKALND…KLLEGEENRM (314 aa)) is the IF rod domain. The interval 142–160 (QQLDLSNCRRNLEPVYEAH) is linker 1. Residues 161 to 252 (ISNLRKQLEM…CLYDEEISQL (92 aa)) form a coil 1B region. The segment at 253–276 (QTHASETSVILSMDNNRDLDLAGI) is linker 12. Residues 277–415 (IAEVRAHYED…ATYRKLLEGE (139 aa)) are coil 2. The interval 416 to 495 (ENRMSGENPS…AAGTLARKTT (80 aa)) is tail. The disordered stretch occupies residues 449 to 495 (DSEAGNAVGSPSTPRNSQSKTRGSSVDPRDAQDESAAAAGTLARKTT). Over residues 457 to 472 (GSPSTPRNSQSKTRGS) the composition is skewed to polar residues.

The protein belongs to the intermediate filament family. Heterotetramer of two type I and two type II keratins. Expressed in epidermis with a particularly strong staining in the nail matrix, nail bed and hyponychium (at protein level).

Its function is as follows. Has a role in hair formation. Specific component of keratin intermediate filaments in the inner root sheath (IRS) of the hair follicle. The chain is Keratin, type II cytoskeletal 74 from Mus musculus (Mouse).